We begin with the raw amino-acid sequence, 898 residues long: Serine/threonine-protein kinase TAO3 (898 aa).

Residues Phe-24–Val-277 form the Protein kinase domain. ATP is bound by residues Ile-30 to Val-38 and Lys-53. Asp-147 acts as the Proton acceptor in catalysis. The tract at residues Thr-316–Ser-374 is disordered. Over residues Gly-334–Pro-351 the composition is skewed to polar residues. Over residues Ser-352–Gln-368 the composition is skewed to low complexity. Coiled-coil stretches lie at residues Glu-452–Asn-502, Phe-548–Leu-649, and Leu-754–Phe-875. A disordered region spans residues Glu-565–Glu-596.

The protein belongs to the protein kinase superfamily. STE Ser/Thr protein kinase family. STE20 subfamily.

It localises to the cytoplasm. Its subcellular location is the cell membrane. The protein resides in the membrane raft. The protein localises to the lipid droplet. The enzyme catalyses L-seryl-[protein] + ATP = O-phospho-L-seryl-[protein] + ADP + H(+). It catalyses the reaction L-threonyl-[protein] + ATP = O-phospho-L-threonyl-[protein] + ADP + H(+). Its function is as follows. Serine/threonine-protein kinase that acts as a regulator of the p38/MAPK14 stress-activated MAPK cascade and of the MAPK8/JNK cascade. In response to DNA damage, involved in the G2/M transition DNA damage checkpoint by activating the p38/MAPK14 stress-activated MAPK cascade, probably by mediating phosphorylation of upstream MAP kinase kinases. Inhibits basal activity of the MAPK8/JNK cascade. The protein is Serine/threonine-protein kinase TAO3 (TAOK3) of Gallus gallus (Chicken).